The primary structure comprises 209 residues: Octanoyltransferase (209 aa).

The region spanning 30-209 (DNEPEIVYLV…IQTEFNKIFK (180 aa)) is the BPL/LPL catalytic domain. Residues 69–76 (RGGKFTFH), 143–145 (AIG), and 156–158 (GVA) each bind substrate. Cys-174 acts as the Acyl-thioester intermediate in catalysis.

It belongs to the LipB family.

It is found in the cytoplasm. The catalysed reaction is octanoyl-[ACP] + L-lysyl-[protein] = N(6)-octanoyl-L-lysyl-[protein] + holo-[ACP] + H(+). Its pathway is protein modification; protein lipoylation via endogenous pathway; protein N(6)-(lipoyl)lysine from octanoyl-[acyl-carrier-protein]: step 1/2. Functionally, catalyzes the transfer of endogenously produced octanoic acid from octanoyl-acyl-carrier-protein onto the lipoyl domains of lipoate-dependent enzymes. Lipoyl-ACP can also act as a substrate although octanoyl-ACP is likely to be the physiological substrate. The chain is Octanoyltransferase from Rickettsia felis (strain ATCC VR-1525 / URRWXCal2) (Rickettsia azadi).